The chain runs to 240 residues: UDP-2,3-diacylglucosamine hydrolase (240 aa).

Mn(2+) is bound by residues Asp7, His9, Asp40, Asn78, and His113. 78–79 (NR) provides a ligand contact to substrate. Substrate is bound by residues Asp121, Ser159, Thr163, Lys166, and His194. Mn(2+) contacts are provided by His194 and His196.

The protein belongs to the LpxH family. The cofactor is Mn(2+).

The protein resides in the cell inner membrane. It carries out the reaction UDP-2-N,3-O-bis[(3R)-3-hydroxytetradecanoyl]-alpha-D-glucosamine + H2O = 2-N,3-O-bis[(3R)-3-hydroxytetradecanoyl]-alpha-D-glucosaminyl 1-phosphate + UMP + 2 H(+). It functions in the pathway glycolipid biosynthesis; lipid IV(A) biosynthesis; lipid IV(A) from (3R)-3-hydroxytetradecanoyl-[acyl-carrier-protein] and UDP-N-acetyl-alpha-D-glucosamine: step 4/6. Hydrolyzes the pyrophosphate bond of UDP-2,3-diacylglucosamine to yield 2,3-diacylglucosamine 1-phosphate (lipid X) and UMP by catalyzing the attack of water at the alpha-P atom. Involved in the biosynthesis of lipid A, a phosphorylated glycolipid that anchors the lipopolysaccharide to the outer membrane of the cell. This chain is UDP-2,3-diacylglucosamine hydrolase, found in Stutzerimonas stutzeri (strain A1501) (Pseudomonas stutzeri).